The primary structure comprises 365 residues: Holliday junction branch migration complex subunit RuvB (365 aa).

Residues 1–10 are compositionally biased toward polar residues; it reads MAIVSSNAAS. Residues 1–48 form a disordered region; it reads MAIVSSNAASQRPRPDRGPDRVPNRVVDGARQAEDDRDPGRVGAKEDS. Composition is skewed to basic and acidic residues over residues 13-23 and 31-48; these read PRPDRGPDRVP and RQAEDDRDPGRVGAKEDS. Residues 13–210 form a large ATPase domain (RuvB-L) region; that stretch reads PRPDRGPDRV…FGLIQRLEFY (198 aa). ATP is bound by residues leucine 49, arginine 50, glycine 91, lysine 94, threonine 95, threonine 96, arginine 200, tyrosine 210, and arginine 247. Position 95 (threonine 95) interacts with Mg(2+). A small ATPAse domain (RuvB-S) region spans residues 211 to 282; that stretch reads GLEDLQAIVE…LVDEALTLHR (72 aa). The tract at residues 285–365 is head domain (RuvB-H); that stretch reads GRGLDASDRR…GWPYPQEQAA (81 aa). 2 residues coordinate DNA: arginine 340 and arginine 345.

The protein belongs to the RuvB family. As to quaternary structure, homohexamer. Forms an RuvA(8)-RuvB(12)-Holliday junction (HJ) complex. HJ DNA is sandwiched between 2 RuvA tetramers; dsDNA enters through RuvA and exits via RuvB. An RuvB hexamer assembles on each DNA strand where it exits the tetramer. Each RuvB hexamer is contacted by two RuvA subunits (via domain III) on 2 adjacent RuvB subunits; this complex drives branch migration. In the full resolvosome a probable DNA-RuvA(4)-RuvB(12)-RuvC(2) complex forms which resolves the HJ.

It is found in the cytoplasm. It catalyses the reaction ATP + H2O = ADP + phosphate + H(+). In terms of biological role, the RuvA-RuvB-RuvC complex processes Holliday junction (HJ) DNA during genetic recombination and DNA repair, while the RuvA-RuvB complex plays an important role in the rescue of blocked DNA replication forks via replication fork reversal (RFR). RuvA specifically binds to HJ cruciform DNA, conferring on it an open structure. The RuvB hexamer acts as an ATP-dependent pump, pulling dsDNA into and through the RuvAB complex. RuvB forms 2 homohexamers on either side of HJ DNA bound by 1 or 2 RuvA tetramers; 4 subunits per hexamer contact DNA at a time. Coordinated motions by a converter formed by DNA-disengaged RuvB subunits stimulates ATP hydrolysis and nucleotide exchange. Immobilization of the converter enables RuvB to convert the ATP-contained energy into a lever motion, pulling 2 nucleotides of DNA out of the RuvA tetramer per ATP hydrolyzed, thus driving DNA branch migration. The RuvB motors rotate together with the DNA substrate, which together with the progressing nucleotide cycle form the mechanistic basis for DNA recombination by continuous HJ branch migration. Branch migration allows RuvC to scan DNA until it finds its consensus sequence, where it cleaves and resolves cruciform DNA. The polypeptide is Holliday junction branch migration complex subunit RuvB (Synechococcus sp. (strain WH7803)).